The primary structure comprises 124 residues: Outer dense fiber protein 2 (124 aa).

Positions 13–124 (KEDSERLMEQ…EAIMEQLKEL (112 aa)) form a coiled coil.

This sequence belongs to the ODF2 family. As to quaternary structure, self-associates. Associates with microtubules and forms a fibrillar structure partially linked to the microtubule network. Interacts through its C-terminus with PLK1. Interacts with ODF1. Interacts with MARK4; the interaction is required for localization of ODF2 to centrioles. Interacts with TSSK4. Interacts with AKNA. Interacts with QRICH2. Interacts with CFAP58. Interacts with BBOF1. Interacts with CCDC38. Interacts with CCDC42. Post-translationally, tyrosine phosphorylated. In terms of tissue distribution, detected in sperm flagella (at protein level).

Its subcellular location is the cytoplasm. The protein localises to the cytoskeleton. It is found in the microtubule organizing center. It localises to the centrosome. The protein resides in the cell projection. Its subcellular location is the cilium. The protein localises to the centriole. It is found in the spindle pole. It localises to the flagellum. Functionally, seems to be a major component of sperm tail outer dense fibers (ODF). ODFs are filamentous structures located on the outside of the axoneme in the midpiece and principal piece of the mammalian sperm tail and may help to maintain the passive elastic structures and elastic recoil of the sperm tail. May have a modulating influence on sperm motility. Functions as a general scaffold protein that is specifically localized at the distal/subdistal appendages of mother centrioles. Component of the centrosome matrix required for the localization of PLK1 and NIN to the centrosomes. Required for the formation and/or maintenance of normal CETN1 assembly. This chain is Outer dense fiber protein 2, found in Mesocricetus auratus (Golden hamster).